The chain runs to 1128 residues: Mastermind-like protein 2 (1128 aa).

2 disordered regions span residues 1 to 22 (MGDTAPPQAPTGGLGGAPGAGL) and 81 to 167 (QHGQ…GDQR). Residues 12–22 (GGLGGAPGAGL) are compositionally biased toward gly residues. A compositionally biased stretch (low complexity) spans 113–122 (PTASQTAAPA). A Phosphoserine modification is found at S177. 5 disordered regions span residues 343-509 (FNID…GSNQ), 521-649 (SPSA…SNQP), 677-714 (QVSQQHRQDQHSVVGQNAGPSPSPNPCSNPNTGSGYMN), 758-794 (QDQINRHLTRPPPDYKDQRRNVGNMQPTAQYSGGSST), and 1039-1073 (GTGLSQSRTVSQPPSLAAGGFPSPNQSSRAFQGTD). Composition is skewed to polar residues over residues 347–357 (LGQQSQRSTPR) and 374–387 (GLTQGPSGSPQLRP). Residues 395-426 (SMASSGLSASSPIPSVPQSQAQPPPATGAARA) show a composition bias toward low complexity. Positions 431-446 (QEVSHAQQLKQIAANR) are enriched in polar residues. Low complexity-rich tracts occupy residues 453–473 (HQQQQQHQPTSWPALPSSAGP) and 484–497 (PSPSFGQQPFSPQS). The segment covering 566-584 (NSDQANQQMPSVLPSQSKP) has biased composition (polar residues). Low complexity predominate over residues 590–649 (TQQQPQQSSITVQPQQQQQQPQQQQQPQQQQQPQPQQQQQQQPQAQQPAAQPTQPLSNQP). Composition is skewed to polar residues over residues 677-695 (QVSQQHRQDQHSVVGQNAG), 778-794 (NVGNMQPTAQYSGGSST), and 1039-1052 (GTGLSQSRTVSQPP).

Belongs to the mastermind family. As to quaternary structure, interacts through its N-terminal region with the ankyrin repeat region of the Notch proteins NOTCH1, NOTCH2, NOTCH3 and NOTCH4. Forms a DNA-binding complex with Notch proteins and RBPSUH/RBP-J kappa.

It localises to the nucleus speckle. Its function is as follows. Acts as a transcriptional coactivator for NOTCH proteins. Has been shown to amplify NOTCH-induced transcription of HES1. Potentiates activation by NOTCH3 and NOTCH4 more efficiently than MAML1 or MAML3. This chain is Mastermind-like protein 2 (MAML2), found in Bos taurus (Bovine).